A 531-amino-acid polypeptide reads, in one-letter code: tRNA(Ile)-lysidine synthase (531 aa).

32–37 serves as a coordination point for ATP; it reads SGGMDS.

It belongs to the tRNA(Ile)-lysidine synthase family.

Its subcellular location is the cytoplasm. It carries out the reaction cytidine(34) in tRNA(Ile2) + L-lysine + ATP = lysidine(34) in tRNA(Ile2) + AMP + diphosphate + H(+). Functionally, ligates lysine onto the cytidine present at position 34 of the AUA codon-specific tRNA(Ile) that contains the anticodon CAU, in an ATP-dependent manner. Cytidine is converted to lysidine, thus changing the amino acid specificity of the tRNA from methionine to isoleucine. The protein is tRNA(Ile)-lysidine synthase of Blochmanniella floridana.